Here is a 324-residue protein sequence, read N- to C-terminus: MEIRVANKYALGKKLGSGSFGDIYVAKDIVTMEEFAVKLESTRSKHPQLLYESKLYKILGGGIGVPKVYWYGIEGDFTIMVLDLLGPSLEDLFTLCNRKFSLKTVRMTADQMLNRIEYVHSKNFIHRDIKPDNFLIGRGKKVTLIHIIDFGLAKKYRDSRSHTSYPYKEGKNLTGTARYASINTHLGIEQSRRDDIEALGYVLMYFLRGSLPWQGLKAISKKDKYDKIMEKKISTSVEVLCRNASFEFVTYLNYCRSLRFEDRPDYTYLRRLLKDLFIREGFTYDFLFDWTCVYASEKDKKKMLENKNRFDQTADQEGRDQRNN.

The region spanning 9–278 (YALGKKLGSG…LRRLLKDLFI (270 aa)) is the Protein kinase domain. Residues 15-23 (LGSGSFGDI) and Lys38 contribute to the ATP site. The active-site Proton acceptor is the Asp128.

It belongs to the protein kinase superfamily. CK1 Ser/Thr protein kinase family. Casein kinase I subfamily. As to quaternary structure, interacts with rhoptry protein RON3; the interaction is direct. Interacts with CK2alpha; the interaction is direct. Interacts with nucleosome assembly protein NAPL. Interacts with RAB5b. Interacts with host GAPVD1. Interacts with host SNX22. It depends on Mg(2+) as a cofactor.

It is found in the cytoplasm. The protein localises to the cytoplasmic vesicle. The protein resides in the secretory vesicle. Its subcellular location is the microneme. It localises to the secreted. It is found in the host cell surface. The enzyme catalyses L-seryl-[protein] + ATP = O-phospho-L-seryl-[protein] + ADP + H(+). It carries out the reaction L-threonyl-[protein] + ATP = O-phospho-L-threonyl-[protein] + ADP + H(+). Functionally, serine/threonine-protein kinase likely to be involved in many cellular processes. Phosphorylates rhoptry protein RON3, nucleosome assembly protein NAPL and DNA/RNA-binding protein ALBA4 in vitro. The polypeptide is Casein kinase I (Plasmodium falciparum (isolate Dd2)).